The following is a 286-amino-acid chain: NADPH-dependent 7-cyano-7-deazaguanine reductase (286 aa).

92–94 (IES) is a substrate binding site. 94–95 (SK) lines the NADPH pocket. The Thioimide intermediate role is filled by Cys194. Residue Asp201 is the Proton donor of the active site. 233–234 (HE) serves as a coordination point for substrate. 262–263 (RG) serves as a coordination point for NADPH.

It belongs to the GTP cyclohydrolase I family. QueF type 2 subfamily. As to quaternary structure, homodimer.

It localises to the cytoplasm. It catalyses the reaction 7-aminomethyl-7-carbaguanine + 2 NADP(+) = 7-cyano-7-deazaguanine + 2 NADPH + 3 H(+). It functions in the pathway tRNA modification; tRNA-queuosine biosynthesis. Its function is as follows. Catalyzes the NADPH-dependent reduction of 7-cyano-7-deazaguanine (preQ0) to 7-aminomethyl-7-deazaguanine (preQ1). The chain is NADPH-dependent 7-cyano-7-deazaguanine reductase from Shewanella sp. (strain MR-7).